Here is a 295-residue protein sequence, read N- to C-terminus: MSVFAGAAAMLPNPKPFFELIPDPRRATPNKLHSLSDILSIALCAVLSGMDDWEAVAEFGRTKEGWLRQFLPLANGIPSHDTFGRVFSLIDPEAFEAAFFDWAAHARIGGDVLDQLALDGKTVRRSHRGSAGRALHLLHAWSCETRLLVAQRRVDTKSNEITAIPDILSLFDLRGVTISIDAIGCQKAVARQITEAGGDYVLALKGNQSALHDDVRLFMETQADRHPQGQAEAVEKDHGRIETRRIWVNDEIDWLTQKPDWPGLKTLVMVESRRELNGQVSCERRCFITSHTADP.

This is an uncharacterized protein from Xanthobacter autotrophicus.